The chain runs to 201 residues: Potassium-transporting ATPase KdpC subunit (201 aa).

A helical transmembrane segment spans residues 7–27 (PAIVLLLVLTAITGLAYPLAM).

This sequence belongs to the KdpC family. As to quaternary structure, the system is composed of three essential subunits: KdpA, KdpB and KdpC.

The protein resides in the cell inner membrane. Its function is as follows. Part of the high-affinity ATP-driven potassium transport (or Kdp) system, which catalyzes the hydrolysis of ATP coupled with the electrogenic transport of potassium into the cytoplasm. This subunit acts as a catalytic chaperone that increases the ATP-binding affinity of the ATP-hydrolyzing subunit KdpB by the formation of a transient KdpB/KdpC/ATP ternary complex. This Bradyrhizobium diazoefficiens (strain JCM 10833 / BCRC 13528 / IAM 13628 / NBRC 14792 / USDA 110) protein is Potassium-transporting ATPase KdpC subunit.